The chain runs to 309 residues: Protein FdhE (309 aa).

This sequence belongs to the FdhE family.

It is found in the cytoplasm. Its function is as follows. Necessary for formate dehydrogenase activity. The sequence is that of Protein FdhE from Escherichia coli (strain K12 / MC4100 / BW2952).